Consider the following 260-residue polypeptide: Phosphatidate cytidylyltransferase (260 aa).

The next 7 membrane-spanning stretches (helical) occupy residues 9 to 29 (IIAL…LMLF), 46 to 66 (MIKL…IIML), 70 to 90 (AGDW…FILL), 102 to 122 (FMDA…FMYF), 130 to 150 (LHYI…AYIF), 172 to 192 (FIGG…FVDF), and 196 to 216 (IWLL…GDLV).

This sequence belongs to the CDS family.

It is found in the cell membrane. It carries out the reaction a 1,2-diacyl-sn-glycero-3-phosphate + CTP + H(+) = a CDP-1,2-diacyl-sn-glycerol + diphosphate. The protein operates within phospholipid metabolism; CDP-diacylglycerol biosynthesis; CDP-diacylglycerol from sn-glycerol 3-phosphate: step 3/3. The chain is Phosphatidate cytidylyltransferase (cdsA) from Staphylococcus haemolyticus (strain JCSC1435).